The sequence spans 1180 residues: IQ domain-containing protein N (1180 aa).

The disordered stretch occupies residues 34–78; the sequence is HPPAPAHPSLLDKMEKAPPQPQHEGLKSKEHLPQQPAEGKTASRR. An IQ 1 domain is found at 103–132; the sequence is HARAATLIQANWRGYWLRQKLISQMMAAKA. Disordered regions lie at residues 283 to 324, 476 to 496, and 786 to 820; these read RVSA…ETPK, MSKT…PQTR, and QRLG…TQGG. 5 consecutive IQ domains span residues 926–955, 956–978, 979–1001, 1113–1142, and 1143–1165; these read RILA…GAMV, IQAT…ATTT, IQSA…MLHP, QDKA…AAKI, and VQAT…LLGP.

Interacts with calmodulin.

Functionally, essential for spermiogenesis and fertilization. May be required for manchette assembly in elongating spermatids. This Homo sapiens (Human) protein is IQ domain-containing protein N.